We begin with the raw amino-acid sequence, 175 residues long: Myosin regulatory light chain 2, atrial isoform (175 aa).

An N-acetylalanine modification is found at A2. Residues S22 and S23 each carry the phosphoserine modification. EF-hand domains lie at 32-67, 102-137, and 138-173; these read AQIQEFKEAFSCIDQNRDGIICKADLRETYSQLGKV, DPEEAILSAFRMFDPSGKGVVNKDEFKQLLLTQADK, and FSPAEVEQMFALTPMDLAGNIDYKSLCYIITHGDEK. Ca(2+)-binding residues include D45, N47, D49, and D56.

In terms of assembly, myosin is a hexamer of 2 heavy chains and 4 light chains. As to expression, predominantly expressed in adult atrial muscle.

This is Myosin regulatory light chain 2, atrial isoform (MYL7) from Homo sapiens (Human).